Consider the following 245-residue polypeptide: Superoxide dismutase [Mn], mitochondrial (245 aa).

The N-terminal 32 residues, 1-32 (MVNLGSIWQNLLASQAPLQSMTGNATTMAGLA), are a transit peptide targeting the mitochondrion. Residues H58, H106, D196, and H200 each contribute to the Mn(2+) site.

The protein belongs to the iron/manganese superoxide dismutase family. In terms of assembly, homotetramer. The cofactor is Mn(2+).

The protein resides in the mitochondrion matrix. The enzyme catalyses 2 superoxide + 2 H(+) = H2O2 + O2. In terms of biological role, destroys superoxide anion radicals which are normally produced within the cells and which are toxic to biological systems. This is Superoxide dismutase [Mn], mitochondrial (sod-2) from Neurospora crassa (strain ATCC 24698 / 74-OR23-1A / CBS 708.71 / DSM 1257 / FGSC 987).